A 178-amino-acid polypeptide reads, in one-letter code: Large ribosomal subunit protein uL5 (178 aa).

The protein belongs to the universal ribosomal protein uL5 family. Part of the 50S ribosomal subunit; part of the 5S rRNA/L5/L18/L25 subcomplex. Contacts the 5S rRNA and the P site tRNA. Forms a bridge to the 30S subunit in the 70S ribosome.

Its function is as follows. This is one of the proteins that bind and probably mediate the attachment of the 5S RNA into the large ribosomal subunit, where it forms part of the central protuberance. In the 70S ribosome it contacts protein S13 of the 30S subunit (bridge B1b), connecting the 2 subunits; this bridge is implicated in subunit movement. Contacts the P site tRNA; the 5S rRNA and some of its associated proteins might help stabilize positioning of ribosome-bound tRNAs. The polypeptide is Large ribosomal subunit protein uL5 (Prochlorococcus marinus (strain MIT 9515)).